A 361-amino-acid chain; its full sequence is tRNA-specific 2-thiouridylase MnmA (361 aa).

ATP contacts are provided by residues 6 to 13 (AMSGGVDS) and Leu32. Residue Cys99 is the Nucleophile of the active site. Residues Cys99 and Cys196 are joined by a disulfide bond. Position 123 (Gly123) interacts with ATP. Residues 145 to 147 (RDQ) are interaction with tRNA. The Cysteine persulfide intermediate role is filled by Cys196.

The protein belongs to the MnmA/TRMU family.

It is found in the cytoplasm. It carries out the reaction S-sulfanyl-L-cysteinyl-[protein] + uridine(34) in tRNA + AH2 + ATP = 2-thiouridine(34) in tRNA + L-cysteinyl-[protein] + A + AMP + diphosphate + H(+). In terms of biological role, catalyzes the 2-thiolation of uridine at the wobble position (U34) of tRNA, leading to the formation of s(2)U34. The sequence is that of tRNA-specific 2-thiouridylase MnmA from Gluconobacter oxydans (strain 621H) (Gluconobacter suboxydans).